A 74-amino-acid polypeptide reads, in one-letter code: uncharacterized protein (74 aa).

This is an uncharacterized protein from Invertebrate iridescent virus 6 (IIV-6).